We begin with the raw amino-acid sequence, 186 residues long: Ribosome-recycling factor (186 aa).

The protein belongs to the RRF family.

It localises to the cytoplasm. Its function is as follows. Responsible for the release of ribosomes from messenger RNA at the termination of protein biosynthesis. May increase the efficiency of translation by recycling ribosomes from one round of translation to another. This Janthinobacterium sp. (strain Marseille) (Minibacterium massiliensis) protein is Ribosome-recycling factor.